The following is a 630-amino-acid chain: tRNA uridine 5-carboxymethylaminomethyl modification enzyme MnmG (630 aa).

13 to 18 serves as a coordination point for FAD; the sequence is GGGHAG. An NAD(+)-binding site is contributed by 273 to 287; that stretch reads GPRYCPSIEDKVNRF.

This sequence belongs to the MnmG family. Homodimer. Heterotetramer of two MnmE and two MnmG subunits. FAD is required as a cofactor.

It localises to the cytoplasm. Its function is as follows. NAD-binding protein involved in the addition of a carboxymethylaminomethyl (cmnm) group at the wobble position (U34) of certain tRNAs, forming tRNA-cmnm(5)s(2)U34. This is tRNA uridine 5-carboxymethylaminomethyl modification enzyme MnmG from Saccharophagus degradans (strain 2-40 / ATCC 43961 / DSM 17024).